A 1014-amino-acid polypeptide reads, in one-letter code: Probable transport protein MmpL11 (1014 aa).

12 consecutive transmembrane segments (helical) span residues 13 to 33 (WLVFTGWLLALVPAIYLAMTQ), 156 to 173 (VRLYVIGQGALSAAVAAN), 188 to 208 (IILIVLLAVFGSLAAAAVPLA), 235 to 255 (TSTVSMFGIALAVDYSLFILM), 279 to 299 (GLAVVLSGMTVIASLTGIYLI), 311 to 331 (AILAVAIAMLASITLTPAALA), 373 to 393 (ASAASTILIIMATPVTSMMLG), 530 to 550 (TEPLMLVFVALIAFVMLLISI), 560 to 580 (VLMTLLSVAAAYGSLVMVFQW), 598 to 618 (VPPLVLAMTFGLSMDYEIFLL), 649 to 669 (AALIMIAVFVGFAFAGMPLVA), and 671 to 691 (IGVACAVAIAVDVTAVRLVLV). The segment at 783-802 (SDRVLPGAATQESEEDPAMG) is disordered.

Belongs to the resistance-nodulation-cell division (RND) (TC 2.A.6) family. MmpL subfamily.

The protein resides in the cell membrane. The polypeptide is Probable transport protein MmpL11 (mmpL11) (Mycobacterium leprae (strain TN)).